Consider the following 1609-residue polypeptide: Probable cation-transporting ATPase I (1609 aa).

Helical transmembrane passes span 30–50 (GAVN…WPVV), 176–196 (LAIL…SAAV), 238–258 (IALS…GTPL), 357–377 (LIAA…AGAI), 641–661 (VHLA…ASAG), 673–693 (WFSP…VSAS), 778–798 (ILAV…ALLV), 921–941 (LFEG…ATGV), 969–989 (TSKV…LALL), and 997–1017 (AVAD…PLVA). Asp1053 (4-aspartylphosphate intermediate) is an active-site residue. The Mg(2+) site is built by Asp1335 and Asp1339. Transmembrane regions (helical) follow at residues 1396-1416 (ILVG…VFGA) and 1426-1446 (LLLV…VTSQ). Residues 1447-1476 (YEEPGEDEYQTDEEADEARRTHQHEVLTGP) are disordered. Residues 1449-1462 (EPGEDEYQTDEEAD) show a composition bias toward acidic residues. The next 2 membrane-spanning stretches (helical) occupy residues 1542–1562 (VVAT…TPVI) and 1573–1593 (PIAW…SVLA).

This sequence belongs to the cation transport ATPase (P-type) (TC 3.A.3) family.

It is found in the cell membrane. It catalyses the reaction ATP + H2O = ADP + phosphate + H(+). The protein is Probable cation-transporting ATPase I (ctpI) of Mycobacterium leprae (strain TN).